The following is a 399-amino-acid chain: Lysosomal acid lipase/cholesteryl ester hydrolase (399 aa).

The N-terminal stretch at 1-27 is a signal peptide; the sequence is MKMRFLGLVVCLVLWTLHSEGSGGKLT. A propeptide spans 28 to 76 (removed in mature form); that stretch reads AVDPETNMNVSEIISYWGFPSEEYLVETEDGYILCLNRIPHGRKNHSDK. N-linked (GlcNAc...) asparagine glycosylation is found at asparagine 36, asparagine 72, asparagine 101, and asparagine 161. One can recognise an AB hydrolase-1 domain in the interval 80 to 380; the sequence is PVVFLQHGLL…EWEHLDFIWG (301 aa). Serine 174 acts as the Charge relay system in catalysis. N-linked (GlcNAc...) asparagine glycosylation is found at asparagine 273 and asparagine 321. Catalysis depends on histidine 374, which acts as the Charge relay system.

It belongs to the AB hydrolase superfamily. Lipase family. Monomer. Post-translationally, glycosylation is not essential for catalytic activity. As to expression, most abundantly expressed in brain, lung, kidney and mammary gland, a moderate expression seen in placenta and expressed at low levels in the liver and heart.

It localises to the lysosome. The catalysed reaction is a sterol ester + H2O = a sterol + a fatty acid + H(+). It carries out the reaction cholesteryl (9Z-octadecenoate) + H2O = cholesterol + (9Z)-octadecenoate + H(+). It catalyses the reaction a triacylglycerol + H2O = a 1,2-diacylglycerol + a fatty acid + H(+). The enzyme catalyses 1,2-di-(9Z-octadecenoyl)-glycerol + (9Z)-octadecenoate + H(+) = 1,2,3-tri-(9Z-octadecenoyl)-glycerol + H2O. The catalysed reaction is a 1,2-diacylglycerol + H2O = a 1-acylglycerol + a fatty acid + H(+). It carries out the reaction 1,2-di-(9Z-octadecenoyl)-glycerol + H2O = 1-(9Z-octadecenoyl)-glycerol + (9Z)-octadecenoate + H(+). It catalyses the reaction a 1,3-diacylglycerol + H2O = a 1-acylglycerol + a fatty acid + H(+). The enzyme catalyses 1,3-di-(9Z-octadecenoyl)-glycerol + H2O = 1-(9Z-octadecenoyl)-glycerol + (9Z)-octadecenoate + H(+). Catalyzes the deacylation of cholesteryl ester core lipids of endocytosed low density lipoproteins to generate free fatty acids and cholesterol. Hydrolyzes triglycerides (1,2,3-triacylglycerol) and diglycerides (such as 1,2-diacylglycerol and 1,3-diacylglycerol) with preference for the acyl moieties at the sn-1 or sn-3 positions. In Homo sapiens (Human), this protein is Lysosomal acid lipase/cholesteryl ester hydrolase (LIPA).